The chain runs to 358 residues: tRNA (guanine(26)-N(2))-dimethyltransferase (358 aa).

One can recognise a Trm1 methyltransferase domain in the interval 5–354 (VIRREGKAVF…ATYGEVERVL (350 aa)). S-adenosyl-L-methionine contacts are provided by Arg-39, Arg-69, Asp-87, Asp-113, and Ala-114.

This sequence belongs to the class I-like SAM-binding methyltransferase superfamily. Trm1 family.

It catalyses the reaction guanosine(26) in tRNA + 2 S-adenosyl-L-methionine = N(2)-dimethylguanosine(26) in tRNA + 2 S-adenosyl-L-homocysteine + 2 H(+). Dimethylates a single guanine residue at position 26 of a number of tRNAs using S-adenosyl-L-methionine as donor of the methyl groups. This is tRNA (guanine(26)-N(2))-dimethyltransferase from Pyrobaculum calidifontis (strain DSM 21063 / JCM 11548 / VA1).